A 128-amino-acid chain; its full sequence is Ribonuclease P protein component (128 aa).

This sequence belongs to the RnpA family. Consists of a catalytic RNA component (M1 or rnpB) and a protein subunit.

The catalysed reaction is Endonucleolytic cleavage of RNA, removing 5'-extranucleotides from tRNA precursor.. In terms of biological role, RNaseP catalyzes the removal of the 5'-leader sequence from pre-tRNA to produce the mature 5'-terminus. It can also cleave other RNA substrates such as 4.5S RNA. The protein component plays an auxiliary but essential role in vivo by binding to the 5'-leader sequence and broadening the substrate specificity of the ribozyme. This Prochlorococcus marinus (strain NATL2A) protein is Ribonuclease P protein component.